A 77-amino-acid chain; its full sequence is Acyl carrier protein (77 aa).

The Carrier domain occupies 2 to 77 (STIEERVKKI…EAIDYVVSHQ (76 aa)). Ser37 is subject to O-(pantetheine 4'-phosphoryl)serine.

Belongs to the acyl carrier protein (ACP) family. In terms of processing, 4'-phosphopantetheine is transferred from CoA to a specific serine of apo-ACP by AcpS. This modification is essential for activity because fatty acids are bound in thioester linkage to the sulfhydryl of the prosthetic group.

Its subcellular location is the cytoplasm. It functions in the pathway lipid metabolism; fatty acid biosynthesis. Carrier of the growing fatty acid chain in fatty acid biosynthesis. The protein is Acyl carrier protein of Oceanospirillum linum.